A 241-amino-acid polypeptide reads, in one-letter code: Uridylate kinase (241 aa).

11–14 is an ATP binding site; that stretch reads KFSG. Residues 19–24 are involved in allosteric activation by GTP; the sequence is GENGFG. Glycine 53 lines the UMP pocket. The ATP site is built by glycine 54 and arginine 58. Residues aspartate 74 and 135–142 contribute to the UMP site; that span reads TGNPFFTT. Positions 162, 168, and 171 each coordinate ATP.

The protein belongs to the UMP kinase family. In terms of assembly, homohexamer.

The protein resides in the cytoplasm. The enzyme catalyses UMP + ATP = UDP + ADP. It participates in pyrimidine metabolism; CTP biosynthesis via de novo pathway; UDP from UMP (UMPK route): step 1/1. Its activity is regulated as follows. Allosterically activated by GTP. Inhibited by UTP. In terms of biological role, catalyzes the reversible phosphorylation of UMP to UDP. In Wolinella succinogenes (strain ATCC 29543 / DSM 1740 / CCUG 13145 / JCM 31913 / LMG 7466 / NCTC 11488 / FDC 602W) (Vibrio succinogenes), this protein is Uridylate kinase.